Reading from the N-terminus, the 510-residue chain is Pre-glycoprotein polyprotein GP complex (510 aa).

A lipid anchor (N-myristoyl glycine; by host) is attached at G2. The Extracellular segment spans residues 2-17; the sequence is GQFITLMQSIPEALNM. The helical transmembrane segment at 18–32 threads the bilayer; the sequence is AFNVALVIVSLLCVT. Position 33 (K33) is a topological domain, cytoplasmic. A helical membrane pass occupies residues 34–53; it reads GLINLWKCGIIQLLMFLALA. Extracellular segments lie at residues 54-58 and 59-448; these read GRSCD and GEYK…ALAD. Residue C57 coordinates Zn(2+). N75, N90, N101, N112, N117, N122, N133, N182, N218, and N243 each carry an N-linked (GlcNAc...) asparagine; by host glycan. 4 cysteine pairs are disulfide-bonded: C87/C250, C295/C308, C317/C326, and C380/C401. N381, N389, N406, and N411 each carry an N-linked (GlcNAc...) asparagine; by host glycan. Residues 449-469 form a helical membrane-spanning segment; that stretch reads LCFWSLVFFTTTVFFQLIGIP. The Cytoplasmic portion of the chain corresponds to 470–510; it reads THRHLIGEGCPKPHRLTSNSLCSCGFYKIPKKPFRWVRKGK. Zn(2+) is bound by residues H471, H473, C479, H483, C491, and C493.

The protein belongs to the arenaviridae GPC protein family. In terms of assembly, homotetramer; disulfide-linked. As to quaternary structure, homotetramer. GP2 homotetramers bind through ionic interactions with GP1 homotetramers to form the GP complex together with the stable signal peptide. The GP-C polyprotein interacts with the host protease MBTPS1/SKI-1 resulting in the polyprotein processing. In terms of processing, specific enzymatic cleavages in vivo yield mature proteins. GP-C polyprotein is cleaved in the endoplasmic reticulum by the host protease MBTPS1. Only cleaved glycoprotein is incorporated into virions. Post-translationally, the SSP remains stably associated with the GP complex following cleavage by signal peptidase and plays crucial roles in the trafficking of GP through the secretory pathway. Myristoylation is necessary for GP2-mediated fusion activity.

It is found in the virion membrane. Its subcellular location is the host endoplasmic reticulum membrane. The protein resides in the host Golgi apparatus membrane. It localises to the host cell membrane. Class I viral fusion protein that directs fusion of viral and host endosomal membranes, leading to delivery of the nucleocapsid into the cytoplasm. Membrane fusion is mediated by irreversible conformational changes induced upon acidification in the endosome. Its function is as follows. Stable signal peptide (SSP): cleaved and functions as a signal peptide. In addition, it is also retained as the third component of the GP complex. The SSP is required for efficient glycoprotein expression, post-translational maturation cleavage of GP1 and GP2, glycoprotein transport to the cell surface plasma membrane, formation of infectious virus particles, and acid pH-dependent glycoprotein-mediated cell fusion. In terms of biological role, interacts with the host receptor. This chain is Pre-glycoprotein polyprotein GP complex, found in Pirital mammarenavirus (isolate Rat/Venezuela/VAV-488/1995) (PIRV).